The following is a 90-amino-acid chain: Co-chaperonin GroES (90 aa).

Belongs to the GroES chaperonin family. In terms of assembly, heptamer of 7 subunits arranged in a ring. Interacts with the chaperonin GroEL.

It is found in the cytoplasm. In terms of biological role, together with the chaperonin GroEL, plays an essential role in assisting protein folding. The GroEL-GroES system forms a nano-cage that allows encapsulation of the non-native substrate proteins and provides a physical environment optimized to promote and accelerate protein folding. GroES binds to the apical surface of the GroEL ring, thereby capping the opening of the GroEL channel. The polypeptide is Co-chaperonin GroES (Borreliella afzelii (strain PKo) (Borrelia afzelii)).